The following is a 71-amino-acid chain: Small ribosomal subunit protein bS18c (71 aa).

It belongs to the bacterial ribosomal protein bS18 family. In terms of assembly, part of the 30S ribosomal subunit.

The protein localises to the plastid. It localises to the chloroplast. The polypeptide is Small ribosomal subunit protein bS18c (rps18) (Mesostigma viride (Green alga)).